Reading from the N-terminus, the 475-residue chain is F-box protein SKIP22 (475 aa).

Positions 114-133 are disordered; sequence DQAKSNPNTSVEDPEGDISG. One can recognise an F-box domain in the interval 319–365; it reads PPCLMRLPTELKLKILELLPGVSIGNMACVCTEMRYLASDNDLWKQK.

Part of a SCF (ASK-cullin-F-box) protein ligase complex. Interacts with SKP1A/ASK1 and SPK1B/ASK2.

The protein resides in the nucleus. Its pathway is protein modification; protein ubiquitination. In terms of biological role, component of SCF(ASK-cullin-F-box) E3 ubiquitin ligase complexes, which may mediate the ubiquitination and subsequent proteasomal degradation of target proteins. In Arabidopsis thaliana (Mouse-ear cress), this protein is F-box protein SKIP22 (SKIP22).